Reading from the N-terminus, the 314-residue chain is tRNA-cytidine(32) 2-sulfurtransferase (314 aa).

Residues 57 to 62 (SGGKDS) carry the PP-loop motif motif. Residues Cys-132, Cys-135, and Cys-223 each coordinate [4Fe-4S] cluster.

It belongs to the TtcA family. In terms of assembly, homodimer. Mg(2+) serves as cofactor. Requires [4Fe-4S] cluster as cofactor.

It is found in the cytoplasm. The enzyme catalyses cytidine(32) in tRNA + S-sulfanyl-L-cysteinyl-[cysteine desulfurase] + AH2 + ATP = 2-thiocytidine(32) in tRNA + L-cysteinyl-[cysteine desulfurase] + A + AMP + diphosphate + H(+). The protein operates within tRNA modification. In terms of biological role, catalyzes the ATP-dependent 2-thiolation of cytidine in position 32 of tRNA, to form 2-thiocytidine (s(2)C32). The sulfur atoms are provided by the cysteine/cysteine desulfurase (IscS) system. The protein is tRNA-cytidine(32) 2-sulfurtransferase of Alkalilimnicola ehrlichii (strain ATCC BAA-1101 / DSM 17681 / MLHE-1).